The following is a 132-amino-acid chain: Holo-[acyl-carrier-protein] synthase (132 aa).

Mg(2+)-binding residues include aspartate 8 and glutamate 64.

It belongs to the P-Pant transferase superfamily. AcpS family. It depends on Mg(2+) as a cofactor.

The protein resides in the cytoplasm. It catalyses the reaction apo-[ACP] + CoA = holo-[ACP] + adenosine 3',5'-bisphosphate + H(+). Its function is as follows. Transfers the 4'-phosphopantetheine moiety from coenzyme A to a Ser of acyl-carrier-protein. The chain is Holo-[acyl-carrier-protein] synthase from Shewanella woodyi (strain ATCC 51908 / MS32).